We begin with the raw amino-acid sequence, 313 residues long: MKVLWVALVITLLAGCQAEVEPEPEPEVQLGREWPGWQGSQPWEQALGRFWDYLRWVQTLSDQVQEELLSTQVIQELTVLMDETMKEVKAYREELEEQLGPIAQETQARVSKELQAAQARLASDMEDVRSRLAQYRSEVQAVMGQTTDELRGRLASHLRKLRKRLLRDAEDLQKRLAVYRAGAVEGSERSVSAIRERLGPLMEKGRGRAGTLASQTLRERAEAWHQKLRGRVEEMGTQARDHLEEIREQLEEVRAKVEEQGSQIRLQAEAFQARLKSWFEPLVEDMQRQWAGLVEKVQLAMATSSTSAPSENH.

A signal peptide spans 1 to 18 (MKVLWVALVITLLAGCQA). Tandem repeats lie at residues 79–100 (VLMD…EQLG), 101–122 (PIAQ…ARLA), 123–144 (SDME…AVMG), 145–166 (QTTD…KRLL), 167–188 (RDAE…EGSE), 189–209 (RSVS…RGRA), 210–229 (GTLA…QKLR), and 230–251 (GRVE…EQLE). The segment at 79–251 (VLMDETMKEV…HLEEIREQLE (173 aa)) is 8 X 22 AA approximate tandem repeats. The segment at 157–167 (HLRKLRKRLLR) is LDL and other lipoprotein receptors binding. 161–164 (LRKR) lines the heparin pocket. Residues 209–286 (AGTLASQTLR…SWFEPLVEDM (78 aa)) form a lipid-binding and lipoprotein association region. 225 to 232 (HQKLRGRV) is a binding site for heparin. The interval 262–313 (SQIRLQAEAFQARLKSWFEPLVEDMQRQWAGLVEKVQLAMATSSTSAPSENH) is homooligomerization. Positions 274-286 (RLKSWFEPLVEDM) are specificity for association with VLDL.

This sequence belongs to the apolipoprotein A1/A4/E family. In terms of assembly, homotetramer. May interact with ABCA1; functionally associated with ABCA1 in the biogenesis of HDLs. May interact with APP/A4 amyloid-beta peptide; the interaction is extremely stable in vitro but its physiological significance is unclear. May interact with MAPT. May interact with MAP2. In the cerebrospinal fluid, interacts with secreted SORL1. Interacts with PMEL; this allows the loading of PMEL luminal fragment on ILVs to induce fibril nucleation. APOE exists as multiple glycosylated and sialylated glycoforms within cells and in plasma. The extent of glycosylation and sialylation are tissue and context specific. In terms of processing, glycated in plasma VLDL. Post-translationally, phosphorylated by FAM20C in the extracellular medium.

It localises to the secreted. The protein resides in the extracellular space. It is found in the extracellular matrix. The protein localises to the extracellular vesicle. Its subcellular location is the endosome. It localises to the multivesicular body. In terms of biological role, APOE is an apolipoprotein, a protein associating with lipid particles, that mainly functions in lipoprotein-mediated lipid transport between organs via the plasma and interstitial fluids. APOE is a core component of plasma lipoproteins and is involved in their production, conversion and clearance. Apolipoproteins are amphipathic molecules that interact both with lipids of the lipoprotein particle core and the aqueous environment of the plasma. As such, APOE associates with chylomicrons, chylomicron remnants, very low density lipoproteins (VLDL) and intermediate density lipoproteins (IDL) but shows a preferential binding to high-density lipoproteins (HDL). It also binds a wide range of cellular receptors including the LDL receptor/LDLR and the very low-density lipoprotein receptor/VLDLR that mediate the cellular uptake of the APOE-containing lipoprotein particles. Finally, APOE also has a heparin-binding activity and binds heparan-sulfate proteoglycans on the surface of cells, a property that supports the capture and the receptor-mediated uptake of APOE-containing lipoproteins by cells. The polypeptide is Apolipoprotein E (APOE) (Balaenoptera acutorostrata scammoni (North Pacific minke whale)).